The following is a 325-amino-acid chain: UPF0285 protein MM_0679 (325 aa).

This sequence belongs to the UPF0285 family.

This is UPF0285 protein MM_0679 from Methanosarcina mazei (strain ATCC BAA-159 / DSM 3647 / Goe1 / Go1 / JCM 11833 / OCM 88) (Methanosarcina frisia).